Reading from the N-terminus, the 352-residue chain is Heavy metal-associated isoprenylated plant protein 36 (352 aa).

The region spanning 29 to 92 (YTTWVLRVSI…KIMKAGRHAE (64 aa)) is the HMA domain. A metal cation is bound by residues C40 and C43. 3 disordered regions span residues 96 to 150 (TSME…GNFD), 162 to 211 (QLQP…GPPE), and 229 to 252 (PHLHHHQQQNHPYPTVHSPPRHHP). The segment covering 97 to 107 (SMENNINNDCN) has biased composition (polar residues). The segment covering 118–128 (ETSGDEDDDEN) has biased composition (acidic residues). Positions 133–148 (NGGGDVGGGGGGGGGN) are enriched in gly residues. A compositionally biased stretch (basic residues) spans 172–183 (KKKKKKKKKKKS). Residues 192–203 (EGGGGGGGGGGP) are compositionally biased toward gly residues. At C349 the chain carries Cysteine methyl ester. C349 carries S-farnesyl cysteine lipidation. The propeptide at 350–352 (CVM) is removed in mature form.

Belongs to the HIPP family.

Heavy-metal-binding protein. In Arabidopsis thaliana (Mouse-ear cress), this protein is Heavy metal-associated isoprenylated plant protein 36.